The following is a 402-amino-acid chain: Putative cytochrome P450 123 (402 aa).

Residue C350 participates in heme binding.

Belongs to the cytochrome P450 family. Heme serves as cofactor.

The sequence is that of Putative cytochrome P450 123 (cyp123) from Mycobacterium bovis (strain ATCC BAA-935 / AF2122/97).